The sequence spans 68 residues: Large ribosomal subunit protein bL32 (68 aa).

This sequence belongs to the bacterial ribosomal protein bL32 family.

The chain is Large ribosomal subunit protein bL32 from Orientia tsutsugamushi (strain Ikeda) (Rickettsia tsutsugamushi).